The sequence spans 270 residues: Aquaporin-11 (270 aa).

The next 2 membrane-spanning stretches (helical) occupy residues 5–25 (IMTM…ISIC) and 59–79 (FELG…GLFF). Positions 94 to 96 (DPS) match the NPA 1 motif. Residues 120–140 (IMGAAVSYRFAKIFWSFGLMA) traverse the membrane as a helical segment. Asn148 carries N-linked (GlcNAc...) asparagine glycosylation. 2 helical membrane passes run 153–173 (ASLQ…TIVN) and 184–204 (MLIS…VSGG). An NPA 2 motif is present at residues 207-209 (NPT). A helical transmembrane segment spans residues 220-240 (GLSGPSFFLVYWFGPILGSSI).

This sequence belongs to the MIP/aquaporin (TC 1.A.8) family.

The protein localises to the membrane. It carries out the reaction H2O(in) = H2O(out). Functionally, probable intracellular unorthodox aquaporin that may modulate the water content and osmolytes during anhydrobiosis. This chain is Aquaporin-11, found in Milnesium tardigradum (Water bear).